The following is a 985-amino-acid chain: MIGSPDLVAFTKETDFSEITTDSSVLPEDLSVPMYPYTGDATPWSKISSAKLKKDFILISEFSEQVGPQPLLTVPLETKACGTFDLNYFSLRIMSVDYQTSLAGSPGYGSFKLNFVEDSKVVLADSREGVFAYVHHLTLYDLEARGFVRPLCLAYVSSDENKIIQQFQRISTEFNKVSECLKTGNRKNFANELEVKLRDLEYTRVVLQKELNTVSVKCSSEREPILNGVHSFERNADEVKLNEKSSHTDEISPQEKDGCGNSRKVEVKLENENRSHFEHEQYGKQRKDKPDKTSCPMPLANKNDELASVEKLIQDYKSLLKQVTCYPTRKLRDSEYSPYEPDDLPQSFDLDLDSQFAGPMLECSVFTYTNTPSQTLQQINSTSSSRFDKRLKTLEELCDDYFYQQALQQLYSIERTFRGDACYLYTQQLCRNLLRNLKSTNFLFEDPCDLDDDVGLQIGQSTIQQPSFLPAPSFLSGPVSLESYASCVEMVPIKLELGGSSQSQVQHSTLNTPSKDNRPQVADKSPAEVEMKGEIISAPDCQGNVESVSNLMKTSISSGDSIEVLGTERSFRSQGANTLVETAMHRPPPLSSATALEGLKQGRVPTRRTCSEDSIEVLCITESISPDELRASYPCAIDEESPEQETDEKNSSQYQEDNNEKSIYVQGKISADHENACLKKLHPSVTVTPPDCPLTLEETSFQDSCQATESATMLLLDEPSRMVPDDLSDCFSYRSTTASTTSECTFPACLPKDKREGGTRRRRGRVGRAALQFMRQFPFAVHAVFSLLSGRTLVVLGSEEAAVRRLVTALSVYLPHLTKYKDSIQPWTSTPLQLTDLLNWKLIGFDRMCSFNPSSLPHCLDHYSRYLSILDVDQKTLHCPTYSGSLINLLVEPKSHFKRGNTYFTFAQSVQSKLVTKAFLLTFSHGHPSPSRPQGSSGTECFLSELHTDDKKILRYLSELIKLHFMEVTPNVLLFSYTTTSIFKL.

In terms of domain architecture, uDENN FLCN/SMCR8-type spans 47-225 (ISSAKLKKDF…VKCSSEREPI (179 aa)). Residues 242–292 (NEKSSHTDEISPQEKDGCGNSRKVEVKLENENRSHFEHEQYGKQRKDKPDK) are compositionally biased toward basic and acidic residues. Disordered regions lie at residues 242 to 301 (NEKS…PLAN), 502 to 528 (QSQV…SPAE), and 639 to 659 (EESP…EDNN). The 506-residue stretch at 390–895 (RLKTLEELCD…LINLLVEPKS (506 aa)) folds into the cDENN FLCN/SMCR8-type domain. Over residues 502-514 (QSQVQHSTLNTPS) the composition is skewed to polar residues. The dDENN FLCN/SMCR8-type domain maps to 904 to 962 (FTFAQSVQSKLVTKAFLLTFSHGHPSPSRPQGSSGTECFLSELHTDDKKILRYLSELIK).

The protein belongs to the SMCR8 family. In terms of assembly, component of the C9orf72-SMCR8 complex. The C9orf72-SMCR8 complex associates with the ATG1/ULK1 kinase complex.

The protein resides in the cytoplasm. Its subcellular location is the nucleus. In terms of biological role, component of the C9orf72-SMCR8 complex, a complex that has guanine nucleotide exchange factor (GEF) activity and regulates autophagy. In the complex, C9orf72 and SMCR8 probably constitute the catalytic subunits that promote the exchange of GDP to GTP, converting inactive GDP-bound RAB8A and RAB39B into their active GTP-bound form, thereby promoting autophagosome maturation. The C9orf72-SMCR8 complex also acts as a negative regulator of autophagy initiation by interacting with the ATG1/ULK1 kinase complex and inhibiting its protein kinase activity. The chain is Guanine nucleotide exchange protein smcr8b (smcr8b) from Danio rerio (Zebrafish).